We begin with the raw amino-acid sequence, 213 residues long: Chloramphenicol acetyltransferase 2 (213 aa).

H189 (proton acceptor) is an active-site residue.

The protein belongs to the chloramphenicol acetyltransferase family. In terms of assembly, homotrimer.

It catalyses the reaction chloramphenicol + acetyl-CoA = chloramphenicol 3-acetate + CoA. In terms of biological role, this enzyme is an effector of chloramphenicol resistance in bacteria. In Haemophilus influenzae, this protein is Chloramphenicol acetyltransferase 2 (cat-IIH).